Consider the following 122-residue polypeptide: Ribosome-binding factor A (122 aa).

Belongs to the RbfA family. Monomer. Binds 30S ribosomal subunits, but not 50S ribosomal subunits or 70S ribosomes.

It localises to the cytoplasm. Its function is as follows. One of several proteins that assist in the late maturation steps of the functional core of the 30S ribosomal subunit. Associates with free 30S ribosomal subunits (but not with 30S subunits that are part of 70S ribosomes or polysomes). Required for efficient processing of 16S rRNA. May interact with the 5'-terminal helix region of 16S rRNA. The polypeptide is Ribosome-binding factor A (Streptococcus agalactiae serotype III (strain NEM316)).